Consider the following 802-residue polypeptide: DSC E3 ubiquitin ligase complex subunit A (802 aa).

The signal sequence occupies residues 1 to 22 (MDNRGSFFFLLIVFYLLLSSQS). Over 23–381 (RPPLLDQDRE…TGPKIEEYDK (359 aa)) the chain is Lumenal. Residues asparagine 48, asparagine 71, asparagine 115, asparagine 126, asparagine 148, and asparagine 166 are each glycosylated (N-linked (GlcNAc...) asparagine). A helical membrane pass occupies residues 382–402 (YSARLVFIICGVFAAQITLLL). At 403–429 (RQIKEASTPSTRSRISFYTIALMAFGD) the chain is on the cytoplasmic side. Residues 430–450 (AFVLIFILLELYPAVSFLVMA) traverse the membrane as a helical segment. Over 451–453 (TAA) the chain is Lumenal. Residues 454 to 474 (FLTFLSVSYIGMKFMMEIWAV) form a helical membrane-spanning segment. Residues 475–550 (QAPERREQER…QETRNDVGAM (76 aa)) are Cytoplasmic-facing. A disordered region spans residues 478-541 (ERREQERRSN…TNRGTTSAAQ (64 aa)). Over residues 532 to 541 (TNRGTTSAAQ) the composition is skewed to polar residues. Residues 551–571 (YARFYFVLFVMLIISIWSFLW) form a helical membrane-spanning segment. Over 572-574 (PNR) the chain is Lumenal. Residues 575-595 (LGALYARALAFVYLSFWTPQI) traverse the membrane as a helical segment. At 596–608 (GRNIIRNCRKALR) the chain is on the cytoplasmic side. Residues 609-629 (WDFVIGQSILRLFPFVYFLTV) form a helical membrane-spanning segment. Topologically, residues 630-642 (RGNVLFIHPDTTT) are lumenal. The chain crosses the membrane as a helical span at residues 643–663 (AFALAGWVWIQVWVLASQDIL). Residues 664 to 802 (GPRFFVPRGW…PICRESIPPV (139 aa)) lie on the Cytoplasmic side of the membrane. Residues 732–796 (CAICMQEIEV…RLRLQCPICR (65 aa)) form an RING-type; atypical zinc finger.

Component of the DSC E3 ubiquitin ligase complex composed of dscA, dscB, dscC and dscD.

The protein localises to the endoplasmic reticulum membrane. It catalyses the reaction S-ubiquitinyl-[E2 ubiquitin-conjugating enzyme]-L-cysteine + [acceptor protein]-L-lysine = [E2 ubiquitin-conjugating enzyme]-L-cysteine + N(6)-ubiquitinyl-[acceptor protein]-L-lysine.. The protein operates within protein modification; protein ubiquitination. Catalytic component of the DSC E3 ubiquitin ligase complex which is required for the srbA transcriptional activator proteolytic cleavage to release the soluble transcription factor from the membrane in low oxygen or sterol conditions. Required for growth during hypoxia and triazole drug susceptibility, as well as for virulence in a murine model of invasive pulmonary aspergillosis (IPA). This Aspergillus fumigatus (strain CBS 144.89 / FGSC A1163 / CEA10) (Neosartorya fumigata) protein is DSC E3 ubiquitin ligase complex subunit A.